A 110-amino-acid polypeptide reads, in one-letter code: NADH-quinone oxidoreductase subunit K (110 aa).

3 helical membrane-spanning segments follow: residues 13 to 33 (VTHG…GIII), 38 to 58 (ILIL…NFLI), and 70 to 90 (VFVF…LAIV).

This sequence belongs to the complex I subunit 4L family. As to quaternary structure, NDH-1 is composed of 14 different subunits. Subunits NuoA, H, J, K, L, M, N constitute the membrane sector of the complex.

Its subcellular location is the cell inner membrane. The catalysed reaction is a quinone + NADH + 5 H(+)(in) = a quinol + NAD(+) + 4 H(+)(out). NDH-1 shuttles electrons from NADH, via FMN and iron-sulfur (Fe-S) centers, to quinones in the respiratory chain. The immediate electron acceptor for the enzyme in this species is believed to be ubiquinone. Couples the redox reaction to proton translocation (for every two electrons transferred, four hydrogen ions are translocated across the cytoplasmic membrane), and thus conserves the redox energy in a proton gradient. This Francisella tularensis subsp. tularensis (strain FSC 198) protein is NADH-quinone oxidoreductase subunit K.